The following is a 709-amino-acid chain: Solute carrier organic anion transporter family member 2B1 (709 aa).

The disordered stretch occupies residues 1-38 (MGPRIGPAGEVPQVPDKETKATMGTENTPGGKASPDPQ). Residues 1–49 (MGPRIGPAGEVPQVPDKETKATMGTENTPGGKASPDPQDVRPSVFHNIK) are Cytoplasmic-facing. Residue Ser-34 is modified to Phosphoserine. Residues 50–69 (LFVLCHSLLQLAQLMISGYL) form a helical membrane-spanning segment. The interval 51–69 (FVLCHSLLQLAQLMISGYL) is required for E1S and taurocholate transport; required for transporter stability. At 70 to 88 (KSSISTVEKRFGLSSQTSG) the chain is on the extracellular side. A helical transmembrane segment spans residues 89-109 (LLASFNEVGNTALIVFVSYFG). Residues 110–115 (SRVHRP) are Cytoplasmic-facing. The helical transmembrane segment at 116 to 140 (RMIGYGAILVALAGLLMTLPHFISE) threads the bilayer. Topologically, residues 141 to 185 (PYRYDNTSPEDMPQDFKASLCLPTTSAPASAPSNGNCSSYTETQH) are extracellular. N-linked (GlcNAc...) asparagine glycosylation occurs at Asn-176. Residues 186–215 (LSVVGIMFVAQTLLGVGGVPIQPFGISYID) traverse the membrane as a helical segment. Topologically, residues 216 to 234 (DFAHNSNSPLYLGILFAVT) are cytoplasmic. The chain crosses the membrane as a helical span at residues 235–255 (MMGPGLAFGLGSLMLRLYVDI). Residues 256–273 (NQMPEGGISLTIKDPRWV) are Extracellular-facing. Residues 274–298 (GAWWLGFLIAAGAVALAAIPYFFFP) traverse the membrane as a helical segment. The Cytoplasmic portion of the chain corresponds to 299–366 (KEMPKEKREL…IKVFPRVLLQ (68 aa)). Phosphothreonine is present on Thr-318. Positions 319-342 (DSPARKGKDSPSKQSPGESTKKQD) are disordered. Position 320 is a phosphoserine (Ser-320). Residues 367–388 (TLRHPIFLLVVLSQVCLSSMAA) form a helical membrane-spanning segment. Topologically, residues 389–408 (GMATFLPKFLERQFSITASY) are extracellular. The helical transmembrane segment at 409 to 432 (ANLLIGCLSFPSVIVGIVVGGVLV) threads the bilayer. Topologically, residues 433–436 (KRLH) are cytoplasmic. A helical transmembrane segment spans residues 437 to 460 (LGPVGCGALCLLGMLLCLFFSLPL). Over 461–564 (FFIGCSSHQI…STCSHLVVPF (104 aa)) the chain is Extracellular. The Kazal-like domain maps to 483 to 543 (LELSPSCMEA…VFYTNCSCVV (61 aa)). Cystine bridges form between Cys-489–Cys-520, Cys-495–Cys-516, and Cys-504–Cys-541. An N-linked (GlcNAc...) asparagine glycan is attached at Asn-538. Residues 565 to 587 (LLLVSLGSALACLTHTPSFMLIL) form a helical membrane-spanning segment. The Cytoplasmic segment spans residues 588-596 (RGVKKEDKT). The helical transmembrane segment at 597-622 (LAVGIQFMFLRILAWMPSPVIHGSAI) threads the bilayer. Residues 623-655 (DTTCVHWALSCGRRAVCRYYNNDLLRNRFIGLQ) lie on the Extracellular side of the membrane. The chain crosses the membrane as a helical span at residues 656–673 (FFFKTGSVICFALVLAVL). The Cytoplasmic segment spans residues 674–709 (RQQDKEARTKESRSSPAVEQQLLVSGPGKKPEDSRV). Positions 679 to 709 (EARTKESRSSPAVEQQLLVSGPGKKPEDSRV) are disordered.

This sequence belongs to the organo anion transporter (TC 2.A.60) family. As to expression, strongly expressed in the liver, at the sinusoidal membrane of the hepatocytes. Expressed in the kidney. Expressed in placental trophoblasts and syncytiotrophoblast. Expressed in the small intestine. Expressed in the blood-brain barrier, in endothelial cells of brain capillaries. Expressed in the retina, in the inner nuclear layer and the inner plexiform layer. Expressed in skelettal muscles. In testis, primarily localized to the basal membrane of Sertoli cells and weakly expressed within the tubules. Also expressed in pancreas, lung, heart, colon, ovary and spleen. Expressed in fetal brain, heart, kidney, liver, lung, skeletal muscle, spleen and pancreas. In terms of tissue distribution, highest expression in brain. Predominant isoform compared to isoform 3 in small intestine duodenum, kidney, placenta, and skeletal muscle. Predominant isoform compared to isoform 1 in liver. Also expressed in small intestine duodenum, kidney, brain, placenta, and skeletal muscle.

It is found in the cell membrane. It localises to the basal cell membrane. Its subcellular location is the basolateral cell membrane. The protein localises to the apical cell membrane. The enzyme catalyses dehydroepiandrosterone 3-sulfate(out) = dehydroepiandrosterone 3-sulfate(in). It carries out the reaction estrone 3-sulfate(out) = estrone 3-sulfate(in). It catalyses the reaction estrone 3-sulfate(out) + hydrogencarbonate(in) = estrone 3-sulfate(in) + hydrogencarbonate(out). The catalysed reaction is taurocholate(out) = taurocholate(in). The enzyme catalyses coproporphyrin III(out) = coproporphyrin III(in). It carries out the reaction substance P(out) = substance P(in). It catalyses the reaction pregnenolone sulfate(out) = pregnenolone sulfate(in). The catalysed reaction is prostaglandin E2(out) = prostaglandin E2(in). The enzyme catalyses prostaglandin D2(out) = prostaglandin D2(in). It carries out the reaction L-thyroxine(out) = L-thyroxine(in). E1S, DHEA-S and PregS transports are regulated by steroid hormones. In the case of testosterone, transport of E1S and DHEA-S was inhibited, whereas progesterone stimulated E1S, DHEA-S and PregS uptake. Progesterone stimulates high-affinity uptake of E1S whereas it inhibits low-affinity uptake of E1S. Progesterone doesn't affect the uptake of PGE2. Functionally, mediates the Na(+)-independent transport of steroid sulfate conjugates and other specific organic anions. Responsible for the transport of estrone 3-sulfate (E1S) through the basal membrane of syncytiotrophoblast, highlighting a potential role in the placental absorption of fetal-derived sulfated steroids including the steroid hormone precursor dehydroepiandrosterone sulfate (DHEA-S). Also facilitates the uptake of sulfated steroids at the basal/sinusoidal membrane of hepatocytes, therefore accounting for the major part of organic anions clearance of liver. Mediates the intestinal uptake of sulfated steroids. Mediates the uptake of the neurosteroids DHEA-S and pregnenolone sulfate (PregS) into the endothelial cells of the blood-brain barrier as the first step to enter the brain. Also plays a role in the reuptake of neuropeptides such as substance P/TAC1 and vasoactive intestinal peptide/VIP released from retinal neurons. May act as a heme transporter that promotes cellular iron availability via heme oxygenase/HMOX2 and independently of TFRC. Also transports heme by-product coproporphyrin III (CPIII), and may be involved in their hepatic disposition. Mediates the uptake of other substrates such as prostaglandins D2 (PGD2), E1 (PGE1) and E2 (PGE2), taurocholate, L-thyroxine, leukotriene C4 and thromboxane B2. May contribute to regulate the transport of organic compounds in testis across the blood-testis-barrier. Shows a pH-sensitive substrate specificity which may be ascribed to the protonation state of the binding site and leads to a stimulation of substrate transport in an acidic microenvironment. The exact transport mechanism has not been yet deciphered but most likely involves an anion exchange, coupling the cellular uptake of organic substrate with the efflux of an anionic compound. Hydrogencarbonate/HCO3(-) acts as a probable counteranion that exchanges for organic anions. Cytoplasmic glutamate may also act as counteranion in the placenta. An inwardly directed proton gradient has also been proposed as the driving force of E1S uptake with a (H(+):E1S) stoichiometry of (1:1). Its function is as follows. Has estrone 3-sulfate (E1S) transport activity comparable with the full-length isoform 1. The chain is Solute carrier organic anion transporter family member 2B1 from Homo sapiens (Human).